The sequence spans 257 residues: Imidazole glycerol phosphate synthase subunit HisF (257 aa).

Residues D11 and D130 contribute to the active site.

Belongs to the HisA/HisF family. Heterodimer of HisH and HisF.

The protein localises to the cytoplasm. It carries out the reaction 5-[(5-phospho-1-deoxy-D-ribulos-1-ylimino)methylamino]-1-(5-phospho-beta-D-ribosyl)imidazole-4-carboxamide + L-glutamine = D-erythro-1-(imidazol-4-yl)glycerol 3-phosphate + 5-amino-1-(5-phospho-beta-D-ribosyl)imidazole-4-carboxamide + L-glutamate + H(+). Its pathway is amino-acid biosynthesis; L-histidine biosynthesis; L-histidine from 5-phospho-alpha-D-ribose 1-diphosphate: step 5/9. In terms of biological role, IGPS catalyzes the conversion of PRFAR and glutamine to IGP, AICAR and glutamate. The HisF subunit catalyzes the cyclization activity that produces IGP and AICAR from PRFAR using the ammonia provided by the HisH subunit. This chain is Imidazole glycerol phosphate synthase subunit HisF, found in Aliivibrio fischeri (strain ATCC 700601 / ES114) (Vibrio fischeri).